Here is a 333-residue protein sequence, read N- to C-terminus: L-lactate dehydrogenase (333 aa).

Residues 29-57 (GQVGMACAYSILQQNLANELCLVDVVADK) and arginine 99 contribute to the NAD(+) site. Arginine 106, asparagine 138, and arginine 169 together coordinate substrate. Asparagine 138 contributes to the NAD(+) binding site. Histidine 193 functions as the Proton acceptor in the catalytic mechanism. Residue threonine 249 coordinates substrate.

It belongs to the LDH/MDH superfamily. LDH family. In terms of assembly, homotetramer.

The protein resides in the cytoplasm. The catalysed reaction is (S)-lactate + NAD(+) = pyruvate + NADH + H(+). The protein operates within fermentation; pyruvate fermentation to lactate; (S)-lactate from pyruvate: step 1/1. This chain is L-lactate dehydrogenase (ldh-1), found in Caenorhabditis elegans.